The sequence spans 265 residues: Hydroxyethylthiazole kinase (265 aa).

Met41 provides a ligand contact to substrate. ATP-binding residues include Arg117 and Ser163. Gly190 contacts substrate.

This sequence belongs to the Thz kinase family. Mg(2+) serves as cofactor.

The catalysed reaction is 5-(2-hydroxyethyl)-4-methylthiazole + ATP = 4-methyl-5-(2-phosphooxyethyl)-thiazole + ADP + H(+). The protein operates within cofactor biosynthesis; thiamine diphosphate biosynthesis; 4-methyl-5-(2-phosphoethyl)-thiazole from 5-(2-hydroxyethyl)-4-methylthiazole: step 1/1. Functionally, catalyzes the phosphorylation of the hydroxyl group of 4-methyl-5-beta-hydroxyethylthiazole (THZ). The sequence is that of Hydroxyethylthiazole kinase from Pediococcus pentosaceus (strain ATCC 25745 / CCUG 21536 / LMG 10740 / 183-1w).